Consider the following 449-residue polypeptide: uncharacterized protein (449 aa).

A compositionally biased stretch (acidic residues) spans 1–11 (MLDAPEQDPVD). The tract at residues 1 to 33 (MLDAPEQDPVDPGDPASPPHGEAEQPLPGPRWP) is disordered. A helical membrane pass occupies residues 45-65 (LLLTALGGLLIAGLVTAIPAV). Residues 349 to 449 (QPPVPPPDIP…PGPAEPAPAG (101 aa)) are disordered. Over residues 365 to 387 (PPIPLQLPTPRPAPPAQQLPSTP) the composition is skewed to pro residues. Over residues 409–418 (HAPASAAPAE) the composition is skewed to low complexity. A compositionally biased stretch (pro residues) spans 437-449 (ATPPGPAEPAPAG).

It localises to the cell membrane. The protein localises to the secreted. Functionally, may play a role in septum formation. This is an uncharacterized protein from Mycobacterium tuberculosis (strain CDC 1551 / Oshkosh).